The following is an 83-amino-acid chain: High-potential iron-sulfur protein (83 aa).

[4Fe-4S] cluster contacts are provided by cysteine 43, cysteine 46, cysteine 61, and cysteine 75.

This sequence belongs to the high-potential iron-sulfur protein (HiPIP) family. In terms of assembly, homodimer.

Its subcellular location is the periplasm. Its function is as follows. Specific class of high-redox-potential 4Fe-4S ferredoxins. Functions in anaerobic electron transport in most purple and in some other photosynthetic bacteria and in at least one genus (Paracoccus) of halophilic, denitrifying bacteria. The chain is High-potential iron-sulfur protein (hip) from Marichromatium gracile (Chromatium gracile).